A 214-amino-acid chain; its full sequence is Large ribosomal subunit protein bL25 (214 aa).

This sequence belongs to the bacterial ribosomal protein bL25 family. CTC subfamily. Part of the 50S ribosomal subunit; part of the 5S rRNA/L5/L18/L25 subcomplex. Contacts the 5S rRNA. Binds to the 5S rRNA independently of L5 and L18.

Functionally, this is one of the proteins that binds to the 5S RNA in the ribosome where it forms part of the central protuberance. This is Large ribosomal subunit protein bL25 from Polynucleobacter necessarius subsp. necessarius (strain STIR1).